The following is a 196-amino-acid chain: Late protein I196L (196 aa).

2 tandem repeats follow at residues 28–48 and 49–70. One copy of the 3; approximate repeat lies at 71–92; the sequence is SNYLTSAISTNISDKEEDTPFS.

This sequence belongs to the asfivirus I196L family.

The sequence is that of Late protein I196L from African swine fever virus (isolate Warthog/Namibia/Wart80/1980) (ASFV).